We begin with the raw amino-acid sequence, 173 residues long: Acireductone dioxygenase (173 aa).

Positions 1–20 (MKVYEYDNSTEDQREDHDSG) are disordered. Fe(2+)-binding residues include histidine 81, histidine 83, glutamate 87, and histidine 126. Histidine 81, histidine 83, glutamate 87, and histidine 126 together coordinate Ni(2+).

This sequence belongs to the acireductone dioxygenase (ARD) family. Fe(2+) serves as cofactor. The cofactor is Ni(2+).

The protein resides in the cytoplasm. It is found in the nucleus. It catalyses the reaction 1,2-dihydroxy-5-(methylsulfanyl)pent-1-en-3-one + O2 = 4-methylsulfanyl-2-oxobutanoate + formate + 2 H(+). The catalysed reaction is 1,2-dihydroxy-5-(methylsulfanyl)pent-1-en-3-one + O2 = 3-(methylsulfanyl)propanoate + CO + formate + 2 H(+). It functions in the pathway amino-acid biosynthesis; L-methionine biosynthesis via salvage pathway; L-methionine from S-methyl-5-thio-alpha-D-ribose 1-phosphate: step 5/6. Catalyzes 2 different reactions between oxygen and the acireductone 1,2-dihydroxy-3-keto-5-methylthiopentene (DHK-MTPene) depending upon the metal bound in the active site. Fe-containing acireductone dioxygenase (Fe-ARD) produces formate and 2-keto-4-methylthiobutyrate (KMTB), the alpha-ketoacid precursor of methionine in the methionine recycle pathway. Ni-containing acireductone dioxygenase (Ni-ARD) produces methylthiopropionate, carbon monoxide and formate, and does not lie on the methionine recycle pathway. The protein is Acireductone dioxygenase of Tuber melanosporum (strain Mel28) (Perigord black truffle).